The following is a 100-amino-acid chain: MARKERLTNEKLNKLFDSPFSLVNYVIKQTKNRIARGDVRSSNVAIEALNFLDLYGIQSECLERDDREQYASGAGEKRKEQSSGNSRRKDPSLYNWSDVK.

Residues 68-91 (EQYASGAGEKRKEQSSGNSRRKDP) show a composition bias toward basic and acidic residues. The tract at residues 68–100 (EQYASGAGEKRKEQSSGNSRRKDPSLYNWSDVK) is disordered.

This sequence belongs to the chlamydial CPn_0121/CT_031/TC_0300 family.

This is an uncharacterized protein from Chlamydia muridarum (strain MoPn / Nigg).